We begin with the raw amino-acid sequence, 438 residues long: Nucleolar protein 12 (438 aa).

Disordered regions lie at residues 1–28 and 60–94; these read MGET…VDPT and ANGV…LNDS. Acidic residues predominate over residues 60-71; the sequence is ANGVEEAAETIE. Phosphoserine is present on residues Ser94 and Ser95. The disordered stretch occupies residues 108-146; sequence AEEDEEKDKDSAGLINDEEDKSPAKQSVLEERTSQEDVK. Residues 135–146 show a composition bias toward basic and acidic residues; it reads VLEERTSQEDVK. RRM domains lie at 164-262 and 270-348; these read KTVF…SVSH and RCVF…RAKS. 2 stretches are compositionally biased toward basic residues: residues 346-357 and 402-412; these read AKSTKPKSITRS and AKKKVNKKRKE. Disordered stretches follow at residues 346–366 and 390–438; these read AKST…KTRT and EGHR…KKDK.

It belongs to the RRM RBM34 family.

It is found in the nucleus. The protein localises to the nucleolus. In terms of biological role, involved in pre-25S rRNA processing. In Schizosaccharomyces pombe (strain 972 / ATCC 24843) (Fission yeast), this protein is Nucleolar protein 12 (nop12).